Reading from the N-terminus, the 397-residue chain is Cercosporin biosynthesis regulatory protein CTB8 (397 aa).

Residues cysteine 26–cysteine 53 constitute a DNA-binding region (zn(2)-C6 fungal-type). Disordered regions lie at residues glycine 62–lysine 92 and alanine 173–histidine 198. The segment covering proline 74 to proline 87 has biased composition (polar residues). Low complexity predominate over residues proline 179–threonine 197.

The protein resides in the nucleus. Its function is as follows. Transcription regulator of the gene cluster that mediates the biosynthesis of cercosporin, a light-activated, non-host-selective toxin. The perylenequinone chromophore of cercosporin absorbs light energy to attain an electronically-activated triplet state and produces active oxygen species such as the hydroxyl radical, superoxide, hydrogen peroxide or singlet oxygen upon reaction with oxygen molecules. These reactive oxygen species cause damage to various cellular components including lipids, proteins and nucleic acids. This is Cercosporin biosynthesis regulatory protein CTB8 from Cercospora nicotianae (Barn spot disease fungus).